Consider the following 61-residue polypeptide: Large ribosomal subunit protein eL37 (61 aa).

Positions 18, 21, 33, and 36 each coordinate Zn(2+). A C4-type zinc finger spans residues 18–36 (CRRCGRNAYNPTKKYCASC).

Belongs to the eukaryotic ribosomal protein eL37 family. Zn(2+) is required as a cofactor.

Functionally, binds to the 23S rRNA. The chain is Large ribosomal subunit protein eL37 from Methanosphaera stadtmanae (strain ATCC 43021 / DSM 3091 / JCM 11832 / MCB-3).